A 181-amino-acid polypeptide reads, in one-letter code: Shikimate kinase 2 (181 aa).

12–17 (GCGKTT) lines the ATP pocket. 2 residues coordinate Mg(2+): Thr16 and Asp32. Substrate is bound by residues Asp34, Arg58, and Gly79. Residues 112-126 (EAEPEADLRPTLTGK) form an LID domain region. Arg120 contacts ATP. Arg139 is a binding site for substrate.

The protein belongs to the shikimate kinase family. AroL subfamily. As to quaternary structure, monomer. Mg(2+) serves as cofactor.

It localises to the cytoplasm. The catalysed reaction is shikimate + ATP = 3-phosphoshikimate + ADP + H(+). It participates in metabolic intermediate biosynthesis; chorismate biosynthesis; chorismate from D-erythrose 4-phosphate and phosphoenolpyruvate: step 5/7. Catalyzes the specific phosphorylation of the 3-hydroxyl group of shikimic acid using ATP as a cosubstrate. This Salmonella heidelberg (strain SL476) protein is Shikimate kinase 2.